A 299-amino-acid polypeptide reads, in one-letter code: Protease HtpX homolog (299 aa).

Transmembrane regions (helical) follow at residues 14-34 (WLLL…VGNL) and 39-59 (GFGG…TMIF). Zn(2+) is bound at residue His-143. Residue Glu-144 is part of the active site. Zn(2+) is bound at residue His-147. The next 2 helical transmembrane spans lie at 153–173 (IRIS…AGMA) and 198–218 (IVFL…ATLV). Position 227 (Glu-227) interacts with Zn(2+).

Belongs to the peptidase M48B family. Requires Zn(2+) as cofactor.

The protein resides in the cell membrane. This is Protease HtpX homolog from Streptococcus thermophilus (strain ATCC BAA-250 / LMG 18311).